Here is a 531-residue protein sequence, read N- to C-terminus: Probable bifunctional methylthioribulose-1-phosphate dehydratase/enolase-phosphatase E1 2 (531 aa).

The interval 1-248 is methylthioribulose-1-phosphate dehydratase; the sequence is MGVPSEGAVG…AIKLHQLGLD (248 aa). Cysteine 120 serves as a coordination point for substrate. Residues histidine 138 and histidine 140 each coordinate Zn(2+). Catalysis depends on glutamate 163, which acts as the Proton donor/acceptor; for methylthioribulose-1-phosphate dehydratase activity. Histidine 213 contacts Zn(2+). Residues 292-531 form an enolase-phosphatase E1 region; that stretch reads ILLDIEGTTT…FRTIETFLEI (240 aa). The Mg(2+) site is built by aspartate 295 and glutamate 297. Residues 430–431 and lysine 464 each bind substrate; that span reads SS. Mg(2+) is bound at residue aspartate 490.

It in the N-terminal section; belongs to the aldolase class II family. MtnB subfamily. The protein in the C-terminal section; belongs to the HAD-like hydrolase superfamily. MasA/MtnC family. Zn(2+) serves as cofactor. The cofactor is Mg(2+).

The catalysed reaction is 5-(methylsulfanyl)-D-ribulose 1-phosphate = 5-methylsulfanyl-2,3-dioxopentyl phosphate + H2O. It catalyses the reaction 5-methylsulfanyl-2,3-dioxopentyl phosphate + H2O = 1,2-dihydroxy-5-(methylsulfanyl)pent-1-en-3-one + phosphate. Its pathway is amino-acid biosynthesis; L-methionine biosynthesis via salvage pathway; L-methionine from S-methyl-5-thio-alpha-D-ribose 1-phosphate: step 2/6. It participates in amino-acid biosynthesis; L-methionine biosynthesis via salvage pathway; L-methionine from S-methyl-5-thio-alpha-D-ribose 1-phosphate: step 3/6. It functions in the pathway amino-acid biosynthesis; L-methionine biosynthesis via salvage pathway; L-methionine from S-methyl-5-thio-alpha-D-ribose 1-phosphate: step 4/6. The chain is Probable bifunctional methylthioribulose-1-phosphate dehydratase/enolase-phosphatase E1 2 from Vitis vinifera (Grape).